The chain runs to 606 residues: Zinc finger protein 652 (606 aa).

Ser57 is subject to Phosphoserine. The span at 71-97 (HLHETEEQPYFRETRAVSDVHAVKEDR) shows a compositional bias: basic and acidic residues. Disordered regions lie at residues 71–113 (HLHE…VSYK) and 130–235 (VSKG…APVQ). The segment covering 98 to 109 (ENSDDTEEEEEE) has biased composition (acidic residues). Position 100 is a phosphoserine (Ser100). Thr103 is modified (phosphothreonine). The segment covering 137 to 149 (VSSQSKETPVLKT) has biased composition (polar residues). Over residues 152–170 (EEEEEESEEEATDDSNDYG) the composition is skewed to acidic residues. Positions 171 to 183 (ENEKQKKKEKIVE) are enriched in basic and acidic residues. The segment covering 184–209 (KVSVTQRRTRRAASVAAATTSPTPRT) has biased composition (low complexity). Phosphoserine is present on residues Ser197 and Ser204. A C2H2-type 1 zinc finger spans residues 245-268 (LTCEKCPRVFNTRWYLEKHMNVTH). Residues 272–294 (QICDKCGKKFVLESELSLHQQTD) form a C2H2-type 2; degenerate zinc finger. 6 consecutive C2H2-type zinc fingers follow at residues 299 to 322 (IQCVSCNKSFKKLWSLHEHIKIVH), 329 to 351 (FSCEICEKKFYTMAHVRKHMVAH), 357 to 379 (FTCETCGKSFKRSMSLKVHSLQH), 385 to 407 (FRCENCDERFQYKYQLRSHMSIH), 413 to 435 (FMCQWCGKDFNMKQYFDEHMKTH), and 441 to 463 (FICEICGKSFTSRPNMKRHRRTH). The C2H2-type 9; degenerate zinc-finger motif lies at 469–492 (YPCDVCGQRFRFSNMLKAHKEKCF). A mediates interaction with CBFA2T3 region spans residues 498 to 606 (VNVPPAVQIP…AEKNSSAQHH (109 aa)).

The protein belongs to the krueppel C2H2-type zinc-finger protein family. In terms of assembly, interacts with CBFA2T3. In terms of tissue distribution, widely expressed with higher expression in breast, prostate, vulva and pancreas.

The protein resides in the nucleus. Functions as a transcriptional repressor. This Homo sapiens (Human) protein is Zinc finger protein 652 (ZNF652).